The following is a 77-amino-acid chain: Large ribosomal subunit protein bL28 (77 aa).

Residues 1–25 are disordered; the sequence is MARVCQVTGKAPMSGNNVSHANNKT.

This sequence belongs to the bacterial ribosomal protein bL28 family.

The sequence is that of Large ribosomal subunit protein bL28 from Paraburkholderia xenovorans (strain LB400).